A 200-amino-acid chain; its full sequence is LHFPL tetraspan subfamily member 6 protein (200 aa).

A signal peptide spans 1–23 (MASSLTCTGVIWALLSFLSAATS). A run of 3 helical transmembrane segments spans residues 84-104 (ICTI…LTAL), 123-143 (GIQF…PLGW), and 166-186 (IGWA…LCTW).

Belongs to the LHFP family.

Its subcellular location is the membrane. The sequence is that of LHFPL tetraspan subfamily member 6 protein from Rattus norvegicus (Rat).